The chain runs to 341 residues: Probable electron transfer flavoprotein subunit alpha, mitochondrial (341 aa).

285–313 (LYIAVGIDGAIQHLAGIKDSKVIAAINRD) lines the FAD pocket.

The protein belongs to the ETF alpha-subunit/FixB family. In terms of assembly, heterodimer of an alpha and a beta subunit. It depends on FAD as a cofactor.

Its subcellular location is the mitochondrion matrix. Its function is as follows. The electron transfer flavoprotein serves as a specific electron acceptor for several dehydrogenases, including five acyl-CoA dehydrogenases, glutaryl-CoA and sarcosine dehydrogenase. It transfers the electrons to the main mitochondrial respiratory chain via ETF-ubiquinone oxidoreductase (ETF dehydrogenase). The polypeptide is Probable electron transfer flavoprotein subunit alpha, mitochondrial (Schizosaccharomyces pombe (strain 972 / ATCC 24843) (Fission yeast)).